Consider the following 188-residue polypeptide: Ion-translocating oxidoreductase complex subunit B (188 aa).

The hydrophobic stretch occupies residues 1-26; sequence MNGVLLAIGVLLPICLASGALLGYAA. One can recognise a 4Fe-4S domain in the interval 32–90; it reads QGDPVAERVNALLPQTQCGQCGYPGCKPYAEAIAAGDRINKCPPGGEATIQALADLLDL. [4Fe-4S] cluster contacts are provided by cysteine 49, cysteine 52, cysteine 57, cysteine 73, cysteine 113, cysteine 116, cysteine 119, cysteine 123, cysteine 143, cysteine 146, cysteine 149, and cysteine 153. 4Fe-4S ferredoxin-type domains are found at residues 104–133 and 134–163; these read RVAYIREAECIGCTKCIQACPVDAIVGAAR and LMHTVIADECTGCDLCLEPCPVDCIEMREI.

The protein belongs to the 4Fe4S bacterial-type ferredoxin family. RnfB subfamily. The complex is composed of six subunits: RnfA, RnfB, RnfC, RnfD, RnfE and RnfG. Requires [4Fe-4S] cluster as cofactor.

It is found in the cell inner membrane. Its function is as follows. Part of a membrane-bound complex that couples electron transfer with translocation of ions across the membrane. This Pseudomonas paraeruginosa (strain DSM 24068 / PA7) (Pseudomonas aeruginosa (strain PA7)) protein is Ion-translocating oxidoreductase complex subunit B.